Consider the following 559-residue polypeptide: Potassium-transporting ATPase potassium-binding subunit (559 aa).

The next 13 membrane-spanning stretches (helical) occupy residues 5–25 (GFLL…PLGS), 27–47 (LARL…RILW), 63–83 (LLAL…LLFW), 132–152 (GLTV…FALI), 170–190 (LVRI…LFFI), 253–273 (LAQM…FGEA), 283–303 (LLWA…WAEV), 327–347 (FGVL…CGAV), 356–376 (ALGG…FGGV), 379–399 (GLYG…LMIG), 416–436 (MTAL…ALAM), 484–504 (LLAF…MAIA), and 524–544 (GALF…LTFI).

Belongs to the KdpA family. In terms of assembly, the system is composed of three essential subunits: KdpA, KdpB and KdpC.

It localises to the cell inner membrane. Its function is as follows. Part of the high-affinity ATP-driven potassium transport (or Kdp) system, which catalyzes the hydrolysis of ATP coupled with the electrogenic transport of potassium into the cytoplasm. This subunit binds the periplasmic potassium ions and delivers the ions to the membrane domain of KdpB through an intramembrane tunnel. In Salmonella enteritidis PT4 (strain P125109), this protein is Potassium-transporting ATPase potassium-binding subunit.